The primary structure comprises 1347 residues: Probable serine/threonine-protein kinase DDB_G0288147 (1347 aa).

The segment at 12-67 (NHRFEPYTLKHLTICKRCEKEIIGVSNSAQICYSCKNIYHTRCCKEIETKKLELIC) adopts a Phorbol-ester/DAG-type zinc-finger fold. Disordered stretches follow at residues 262 to 316 (PFNE…LNES), 333 to 402 (SNNS…KSSK), and 463 to 485 (DNNN…NNNN). Over residues 271 to 282 (DSTLSASTYNRR) the composition is skewed to polar residues. Low complexity-rich tracts occupy residues 286–316 (KNKN…LNES), 333–342 (SNNSNNLAAL), and 350–361 (TTTTTTTTTTTT). 2 stretches are compositionally biased toward basic residues: residues 366–382 (NNHH…KSRK) and 389–402 (NKKK…KSSK). Residues 464 to 485 (NNNNNNNNNNNNNNNSNNNNNN) are compositionally biased toward low complexity. A Protein kinase domain is found at 599–854 (VKINVEIYDS…EILKVFYSLL (256 aa)). ATP is bound by residues 605–613 (IYDSPLCTV) and lysine 626. Catalysis depends on aspartate 724, which acts as the Proton acceptor. Disordered stretches follow at residues 937–1241 (SERK…IVNP) and 1282–1310 (SSDS…IRSP). Acidic residues predominate over residues 976–986 (IIDDDDDDDDD). Low complexity-rich tracts occupy residues 1004-1015 (NINSENKNNNNV) and 1024-1062 (SSNS…NNNN). 2 stretches are compositionally biased toward polar residues: residues 1063-1083 (LRQN…NQLM) and 1118-1127 (LSSSQTSEIG). Composition is skewed to low complexity over residues 1128-1241 (DNNT…IVNP) and 1282-1291 (SSDSSNSLSD).

It belongs to the protein kinase superfamily. TKL Ser/Thr protein kinase family.

The enzyme catalyses L-seryl-[protein] + ATP = O-phospho-L-seryl-[protein] + ADP + H(+). The catalysed reaction is L-threonyl-[protein] + ATP = O-phospho-L-threonyl-[protein] + ADP + H(+). The chain is Probable serine/threonine-protein kinase DDB_G0288147 from Dictyostelium discoideum (Social amoeba).